An 80-amino-acid polypeptide reads, in one-letter code: MPKKNEAPASFEKALSELEQIVTRLESGDLPLEEALNEFERGVQLARQGQAKLQQAEQRVQILLSDNEDASLTPFTPDNE.

Belongs to the XseB family. As to quaternary structure, heterooligomer composed of large and small subunits.

Its subcellular location is the cytoplasm. It carries out the reaction Exonucleolytic cleavage in either 5'- to 3'- or 3'- to 5'-direction to yield nucleoside 5'-phosphates.. Functionally, bidirectionally degrades single-stranded DNA into large acid-insoluble oligonucleotides, which are then degraded further into small acid-soluble oligonucleotides. The sequence is that of Exodeoxyribonuclease 7 small subunit from Escherichia coli O139:H28 (strain E24377A / ETEC).